The primary structure comprises 173 residues: Co-chaperone protein HscB homolog (173 aa).

Positions 5 to 77 constitute a J domain; it reads CHFALFDLQP…PRRARYLLAI (73 aa).

This sequence belongs to the HscB family. Interacts with HscA and stimulates its ATPase activity.

In terms of biological role, co-chaperone involved in the maturation of iron-sulfur cluster-containing proteins. Seems to help targeting proteins to be folded toward HscA. The sequence is that of Co-chaperone protein HscB homolog from Pseudomonas putida (strain W619).